Reading from the N-terminus, the 267-residue chain is UDP-glucose:undecaprenyl-phosphate glucose-1-phosphate transferase (267 aa).

The chain crosses the membrane as a helical span at residues 83-103; it reads VAAALLTALFAPLLLLAALAI.

Belongs to the bacterial sugar transferase family.

It localises to the cell membrane. The enzyme catalyses di-trans,octa-cis-undecaprenyl phosphate + UDP-alpha-D-glucose = alpha-D-glucosyl di-trans,octa-cis-undecaprenyl diphosphate + UMP. Is likely the initiating enzyme for holdfast polysaccharide synthesis. Catalyzes the transfer of the glucose-1-phosphate moiety from UDP-Glc onto the carrier lipid undecaprenyl phosphate (C55-P), forming a phosphoanhydride bond yielding to glucosyl-pyrophosphoryl-undecaprenol (Glc-PP-C55). Also possesses a weak galactose-1-P transferase activity. This Caulobacter vibrioides (strain ATCC 19089 / CIP 103742 / CB 15) (Caulobacter crescentus) protein is UDP-glucose:undecaprenyl-phosphate glucose-1-phosphate transferase (pssY).